The primary structure comprises 426 residues: Pyrophosphate--fructose 6-phosphate 1-phosphotransferase 1 (426 aa).

Residue Gly15 participates in diphosphate binding. Asp114 lines the Mg(2+) pocket. Residues 140–142 (TID), 186–188 (MGR), Glu247, and 308–311 (YELR) contribute to the substrate site. The Proton acceptor role is filled by Asp142.

Belongs to the phosphofructokinase type A (PFKA) family. PPi-dependent PFK group II subfamily. Clade 'Short' sub-subfamily. Homotetramer. Requires Mg(2+) as cofactor.

The protein resides in the cytoplasm. The enzyme catalyses beta-D-fructose 6-phosphate + diphosphate = beta-D-fructose 1,6-bisphosphate + phosphate + H(+). It functions in the pathway carbohydrate degradation; glycolysis; D-glyceraldehyde 3-phosphate and glycerone phosphate from D-glucose: step 3/4. Non-allosteric. Catalyzes the phosphorylation of D-fructose 6-phosphate, the first committing step of glycolysis. Uses inorganic phosphate (PPi) as phosphoryl donor instead of ATP like common ATP-dependent phosphofructokinases (ATP-PFKs), which renders the reaction reversible, and can thus function both in glycolysis and gluconeogenesis. Consistently, PPi-PFK can replace the enzymes of both the forward (ATP-PFK) and reverse (fructose-bisphosphatase (FBPase)) reactions. The chain is Pyrophosphate--fructose 6-phosphate 1-phosphotransferase 1 (Pfk1) from Trichomonas vaginalis (strain ATCC PRA-98 / G3).